Here is a 660-residue protein sequence, read N- to C-terminus: UvrABC system protein B (660 aa).

The Helicase ATP-binding domain occupies 24-177 (KGFKEGNQFE…DDLARALIDL (154 aa)). 37-44 (GVTGSGKT) lines the ATP pocket. The Beta-hairpin motif lies at 90 to 113 (YYDYYQPEAYVPQSDTYIAKDSSV). The Helicase C-terminal domain maps to 428–594 (QIDDLVSEVN…TIQKSVRDLI (167 aa)). A UVR domain is found at 620 to 655 (EKHIADIEKKMKKAAAELNFEAAAEYRDKLIMLKNT).

This sequence belongs to the UvrB family. Forms a heterotetramer with UvrA during the search for lesions. Interacts with UvrC in an incision complex.

The protein localises to the cytoplasm. In terms of biological role, the UvrABC repair system catalyzes the recognition and processing of DNA lesions. A damage recognition complex composed of 2 UvrA and 2 UvrB subunits scans DNA for abnormalities. Upon binding of the UvrA(2)B(2) complex to a putative damaged site, the DNA wraps around one UvrB monomer. DNA wrap is dependent on ATP binding by UvrB and probably causes local melting of the DNA helix, facilitating insertion of UvrB beta-hairpin between the DNA strands. Then UvrB probes one DNA strand for the presence of a lesion. If a lesion is found the UvrA subunits dissociate and the UvrB-DNA preincision complex is formed. This complex is subsequently bound by UvrC and the second UvrB is released. If no lesion is found, the DNA wraps around the other UvrB subunit that will check the other stand for damage. In Agathobacter rectalis (strain ATCC 33656 / DSM 3377 / JCM 17463 / KCTC 5835 / VPI 0990) (Eubacterium rectale), this protein is UvrABC system protein B.